Here is a 423-residue protein sequence, read N- to C-terminus: Histidine--tRNA ligase (423 aa).

This sequence belongs to the class-II aminoacyl-tRNA synthetase family. As to quaternary structure, homodimer.

It is found in the cytoplasm. It carries out the reaction tRNA(His) + L-histidine + ATP = L-histidyl-tRNA(His) + AMP + diphosphate + H(+). This is Histidine--tRNA ligase from Anoxybacillus flavithermus (strain DSM 21510 / WK1).